The following is a 295-amino-acid chain: Gamma-glutamyl-L-1-hydroxyisopropylamide hydrolase (295 aa).

The Glutamine amidotransferase type-1 domain occupies 5-221 (RILICDGNTE…LRESARSLVE (217 aa)). Residue Cys-104 is the Nucleophile of the active site. Catalysis depends on residues His-200 and Glu-202.

The catalysed reaction is gamma-L-glutamyl-L-alaninol + H2O = L-alaninol + L-glutamate. In terms of biological role, involved in the degradation of isopropylamine, which is a constituent of the herbicides atrazine. Catalyzes the hydrolysis of gamma-glutamyl-L-alaninol (GALO) to L-alaninol and L-glutamate. It can also uses gamma-glutamyl-isopropylamide, gamma-glutamyl-ethylamide, L-glutamine, and gamma-glutamyl-p-nitroanilide. In Pseudomonas sp, this protein is Gamma-glutamyl-L-1-hydroxyisopropylamide hydrolase (ipuF).